The sequence spans 407 residues: WEB family protein At3g51720 (407 aa).

Coiled coils occupy residues 72-99 (KVLK…DKEN), 128-217 (SVGL…ARAA), and 247-278 (EEIL…EAEE).

It belongs to the WEB family.

In Arabidopsis thaliana (Mouse-ear cress), this protein is WEB family protein At3g51720.